A 610-amino-acid polypeptide reads, in one-letter code: MTETKDLLQDEEFLKIRRLNSAEANKRHSVTYDNVILPQESMEVSPRSSTTSLVEPVESTEGVESTEAERVAGKQEQEEEYPVDAHMQKYLSHLKSKSRSRFHRKDASKYVSFFGDVSFDPRPTLLDSAINVPFQTTFKGPVLEKQLKNLQLTKTKTKATVKTTVKTTEKTDKADAPPGEKLESNFSGIYVFAWMFLGWIAIRCCTDYYASYGSAWNKLEIVQYMTTDLFTIAMLDLAMFLCTFFVVFVHWLVKKRIINWKWTGFVAVSIFELAFIPVTFPIYVYYFDFNWVTRIFLFLHSVVFVMKSHSFAFYNGYLWDIKQELEYSSKQLQKYKESLSPETREILQKSCDFCLFELNYQTKDNDFPNNISCSNFFMFCLFPVLVYQINYPRTSRIRWRYVLEKVCAIIGTIFLMMVTAQFFMHPVAMRCIQFHNTPTFGGWIPATQEWFHLLFDMIPGFTVLYMLTFYMIWDALLNCVAELTRFADRYFYGDWWNCVSFEEFSRIWNVPVHKFLLRHVYHSSMGALHLSKSQATLFTFFLSAVFHEMAMFAIFRRVRGYLFMFQLSQFVWTALSNTKFLRARPQLSNVVFSFGVCSGPSIIMTLYLTL.

Residues serine 21 and serine 45 each carry the phosphoserine modification. Residues 41-81 form a disordered region; it reads SMEVSPRSSTTSLVEPVESTEGVESTEAERVAGKQEQEEEY. Residues 67–76 show a composition bias toward basic and acidic residues; it reads EAERVAGKQE. 5 helical membrane passes run 182-202, 229-249, 264-284, 371-391, and 409-429; these read LESN…WIAI, LFTI…VVFV, GFVA…PIYV, ISCS…QINY, and IIGT…PVAM. The FYXDWWN motif signature appears at 491-497; the sequence is FYGDWWN. 2 consecutive transmembrane segments (helical) span residues 535–555 and 590–610; these read ATLF…FAIF and VVFS…YLTL. The active site involves histidine 547.

Belongs to the membrane-bound acyltransferase family. Sterol o-acyltransferase subfamily.

Its subcellular location is the endoplasmic reticulum membrane. It carries out the reaction lanosterol + an acyl-CoA = lanosteryl ester + CoA. In terms of biological role, sterol O-acyltransferase that catalyzes the formation of stery esters. In Saccharomyces cerevisiae (strain ATCC 204508 / S288c) (Baker's yeast), this protein is Sterol O-acyltransferase 1.